The primary structure comprises 194 residues: Adenylate kinase (194 aa).

10-15 (GAGKGT) contacts ATP. The segment at 30–59 (STGDMLRAAVAQQSEIGKRAKAVMDAGQLV) is NMP. Residues T31, R36, 57–59 (QLV), 85–88 (GYPR), and Q92 each bind AMP. Residues 126–142 (SRVAETIAKGAQVRSDD) form an LID region. Residue R127 coordinates ATP. Positions 139 and 150 each coordinate AMP. Residue A178 participates in ATP binding.

This sequence belongs to the adenylate kinase family. As to quaternary structure, monomer.

The protein localises to the cytoplasm. It catalyses the reaction AMP + ATP = 2 ADP. It participates in purine metabolism; AMP biosynthesis via salvage pathway; AMP from ADP: step 1/1. Functionally, catalyzes the reversible transfer of the terminal phosphate group between ATP and AMP. Plays an important role in cellular energy homeostasis and in adenine nucleotide metabolism. This Brucella melitensis biotype 1 (strain ATCC 23456 / CCUG 17765 / NCTC 10094 / 16M) protein is Adenylate kinase.